The following is a 205-amino-acid chain: Ras-related protein rab-6.2 (205 aa).

Residues 18-25 (EQSVGKTS), Thr-42, 66-70 (TAGQE), and 124-127 (KTDL) each bind GTP. S-geranylgeranyl cysteine attachment occurs at residues Cys-203 and Cys-205. Cys-205 is subject to Cysteine methyl ester.

This sequence belongs to the small GTPase superfamily. Rab family. Interacts with GARP complex component vps-52. Interacts (in GTP-bound form) with lin-10. May interact (in GTP-bound form) with eat-17. In terms of tissue distribution, highly expressed in body wall muscles, pharyngeal and vulval muscles, hypodermis, intestine, the gonad, coelomocytes, and neurons, including command interneuron (at protein level). Highly expressed in the terminal bulb muscles.

It localises to the perikaryon. The protein resides in the cell projection. It is found in the dendrite. Its subcellular location is the golgi apparatus. The protein localises to the cytoplasmic vesicle. Its function is as follows. The small GTPases Rab are key regulators of intracellular membrane trafficking, from the formation of transport vesicles to their fusion with membranes. Rabs cycle between an inactive GDP-bound form and an active GTP-bound form that is able to recruit to membranes different set of downstream effectors directly responsible for vesicle formation, movement, tethering and fusion. In its active GTP-bound form, acts redundantly with rab-6.1 (in its active GTP-bound form) to positively regulate the retrograde trafficking of cargo molecules from endosomes to the Golgi compartment. Required for the retrograde trafficking of glr-1, a subunit of AMPA-type glutamate receptors (AMPRs), out of early endosomes and into the Golgi compartment in neurons. Its role in glr-1 trafficking may partly be mediated by its interaction with lin-10 and association with components of the retromer complex such as rme-8. Together with rab-6.2, promotes the retrograde trafficking of mig-14 from endosomes to Golgi structures in the intestine. Plays a role in the epidermis to promote cuticle integrity and impermeability of the cuticle barrier to exogenous molecules. May have a role in the glycosylation of the cuticular surface. Required for seam cell division and alae formation. Required for grinder formation, which is the feeding organ that breaks down food. In contrast to rab-6.1, may play a minor role in the exocytosis of secretory vesicles (cortical granules) during the oocyte-to-embryo transition. The protein is Ras-related protein rab-6.2 of Caenorhabditis elegans.